A 76-amino-acid chain; its full sequence is U7-lycotoxin-Ls1c (76 aa).

An N-terminal signal peptide occupies residues 1 to 22; sequence MKLIIFTGLALFLLVSLIDVEA. A propeptide spanning residues 23 to 26 is cleaved from the precursor; it reads QNEG.

This sequence belongs to the neurotoxin 19 (CSTX) family. 07 (U7-Lctx) subfamily. Contains 4 disulfide bonds. Expressed by the venom gland.

Its subcellular location is the secreted. This chain is U7-lycotoxin-Ls1c, found in Lycosa singoriensis (Wolf spider).